An 89-amino-acid polypeptide reads, in one-letter code: Small ribosomal subunit protein uS15 (89 aa).

Belongs to the universal ribosomal protein uS15 family. In terms of assembly, part of the 30S ribosomal subunit. Forms a bridge to the 50S subunit in the 70S ribosome, contacting the 23S rRNA.

Its function is as follows. One of the primary rRNA binding proteins, it binds directly to 16S rRNA where it helps nucleate assembly of the platform of the 30S subunit by binding and bridging several RNA helices of the 16S rRNA. Forms an intersubunit bridge (bridge B4) with the 23S rRNA of the 50S subunit in the ribosome. This is Small ribosomal subunit protein uS15 from Rhizorhabdus wittichii (strain DSM 6014 / CCUG 31198 / JCM 15750 / NBRC 105917 / EY 4224 / RW1) (Sphingomonas wittichii).